The sequence spans 173 residues: Lipoprotein signal peptidase (173 aa).

Helical transmembrane passes span 14–34 (LAWL…KYYF), 44–64 (IIVI…AAFS), 72–92 (WQRW…VVWL), and 98–118 (DDTW…GNLY). Active-site residues include D128 and D147. Residues 139–159 (YFPAFNVADSAITVGAIMLAL) form a helical membrane-spanning segment.

It belongs to the peptidase A8 family.

It localises to the cell inner membrane. The enzyme catalyses Release of signal peptides from bacterial membrane prolipoproteins. Hydrolyzes -Xaa-Yaa-Zaa-|-(S,diacylglyceryl)Cys-, in which Xaa is hydrophobic (preferably Leu), and Yaa (Ala or Ser) and Zaa (Gly or Ala) have small, neutral side chains.. The protein operates within protein modification; lipoprotein biosynthesis (signal peptide cleavage). This protein specifically catalyzes the removal of signal peptides from prolipoproteins. The polypeptide is Lipoprotein signal peptidase (Pseudomonas syringae pv. tomato (strain ATCC BAA-871 / DC3000)).